Here is a 584-residue protein sequence, read N- to C-terminus: Chaperonin GroEL 1 (584 aa).

ATP contacts are provided by residues 29-32 (TIGP), 86-90 (DGTTT), Gly413, and Asp492. The segment at 523–542 (EPEAAAPGGPGGDPMGGMGG) is disordered. Positions 530-542 (GGPGGDPMGGMGG) are enriched in gly residues.

The protein belongs to the chaperonin (HSP60) family. Forms a cylinder of 14 subunits composed of two heptameric rings stacked back-to-back. Interacts with the co-chaperonin GroES.

The protein resides in the cytoplasm. The enzyme catalyses ATP + H2O + a folded polypeptide = ADP + phosphate + an unfolded polypeptide.. In terms of biological role, together with its co-chaperonin GroES, plays an essential role in assisting protein folding. The GroEL-GroES system forms a nano-cage that allows encapsulation of the non-native substrate proteins and provides a physical environment optimized to promote and accelerate protein folding. This chain is Chaperonin GroEL 1, found in Prochlorococcus marinus (strain MIT 9312).